We begin with the raw amino-acid sequence, 221 residues long: Ribonuclease P protein subunit p29 (221 aa).

Residue Ser10 is modified to Phosphoserine.

The protein belongs to the eukaryotic/archaeal RNase P protein component 1 family. Component of nuclear RNase P and RNase MRP ribonucleoproteins. RNase P consists of a catalytic RNA moiety and 10 different protein chains; POP1, POP4, POP5, POP7, RPP14, RPP21, RPP25, RPP30, RPP38 and RPP40. Within the RNase P complex, POP1, POP7 and RPP25 form the 'finger' subcomplex, POP5, RPP14, RPP40 and homodimeric RPP30 form the 'palm' subcomplex, and RPP21, POP4 and RPP38 form the 'wrist' subcomplex. All subunits of the RNase P complex interact with the catalytic RNA. Several subunits of RNase P are also part of the RNase MRP complex. RNase MRP consists of a catalytic RNA moiety and about 8 protein subunits; POP1, POP7, RPP25, RPP30, RPP38, RPP40 and possibly also POP4 and POP5.

Its subcellular location is the nucleus. It is found in the nucleolus. Component of ribonuclease P, a ribonucleoprotein complex that generates mature tRNA molecules by cleaving their 5'-ends. This Rattus norvegicus (Rat) protein is Ribonuclease P protein subunit p29 (Pop4).